The primary structure comprises 366 residues: MKPSIITKLKVLQERYYEVETLLGNSEVAKDRERLRILSKEYAQLTDIHTCFQHWQQVQENISITGPMLEDPEMHDMVQDELNKLHSLLSTLEQQLLTLLLQKDSNKDPNDERGCFIEVRAGTGGDEAALFAGDLFRMYSRYAEIHSWQIDVISASSGPHGGYKEIIVKMSHDNAYGQLKFESGGHRVQRIPETESQGRIHTSSCTVAVIPDILHAELPEISPEDIRVDTFRSSGAGGQHVNTTESAIRITHLPTGLVVECQDERSQHKNKAKAMAVLSARLRAAEAQCRQQEESCMRRNLLGSGYRSDRIRTYNFPQGRITDHRIGFTTYRLNEVIEGKLEILLQPIIQEYQTNQLIALSESEIT.

At Gln239 the chain carries N5-methylglutamine.

This sequence belongs to the prokaryotic/mitochondrial release factor family. Methylated by PrmC. Methylation increases the termination efficiency of RF1.

It localises to the cytoplasm. Functionally, peptide chain release factor 1 directs the termination of translation in response to the peptide chain termination codons UAG and UAA. This chain is Peptide chain release factor 1, found in Baumannia cicadellinicola subsp. Homalodisca coagulata.